The primary structure comprises 320 residues: tRNA-cytidine(32) 2-sulfurtransferase (320 aa).

The PP-loop motif motif lies at 54–59 (SGGKDS). Residues Cys129, Cys132, and Cys220 each coordinate [4Fe-4S] cluster.

The protein belongs to the TtcA family. In terms of assembly, homodimer. It depends on Mg(2+) as a cofactor. The cofactor is [4Fe-4S] cluster.

The protein resides in the cytoplasm. The catalysed reaction is cytidine(32) in tRNA + S-sulfanyl-L-cysteinyl-[cysteine desulfurase] + AH2 + ATP = 2-thiocytidine(32) in tRNA + L-cysteinyl-[cysteine desulfurase] + A + AMP + diphosphate + H(+). Its pathway is tRNA modification. Catalyzes the ATP-dependent 2-thiolation of cytidine in position 32 of tRNA, to form 2-thiocytidine (s(2)C32). The sulfur atoms are provided by the cysteine/cysteine desulfurase (IscS) system. This is tRNA-cytidine(32) 2-sulfurtransferase from Bordetella bronchiseptica (strain ATCC BAA-588 / NCTC 13252 / RB50) (Alcaligenes bronchisepticus).